A 213-amino-acid chain; its full sequence is NADH dehydrogenase [ubiquinone] iron-sulfur protein 7, mitochondrial (213 aa).

The N-terminal 37 residues, 1 to 37 (MAVLSAPGLRGFRILGLRSSVGPAVQARSVHQSVATD), are a transit peptide targeting the mitochondrion. Positions 30-44 (VHQSVATDGPSSTQP) are enriched in polar residues. Positions 30 to 53 (VHQSVATDGPSSTQPALPKARAVA) are disordered. 2 residues coordinate [4Fe-4S] cluster: Cys-88 and Cys-89. Arg-111 is modified (hydroxyarginine). Cys-153 and Cys-183 together coordinate [4Fe-4S] cluster.

It belongs to the complex I 20 kDa subunit family. Core subunit of respiratory chain NADH dehydrogenase (Complex I) which is composed of 45 different subunits. This is a component of the iron-sulfur (IP) fragment of the enzyme. [4Fe-4S] cluster serves as cofactor. In terms of processing, hydroxylated ar Arg-111 by NDUFAF5 early in the pathway of assembly of complex I, before the formation of the juncture between peripheral and membrane arms.

The protein localises to the mitochondrion inner membrane. It carries out the reaction a ubiquinone + NADH + 5 H(+)(in) = a ubiquinol + NAD(+) + 4 H(+)(out). Its function is as follows. Core subunit of the mitochondrial membrane respiratory chain NADH dehydrogenase (Complex I) which catalyzes electron transfer from NADH through the respiratory chain, using ubiquinone as an electron acceptor. Essential for the catalytic activity of complex I. This Pan troglodytes (Chimpanzee) protein is NADH dehydrogenase [ubiquinone] iron-sulfur protein 7, mitochondrial (NDUFS7).